A 309-amino-acid chain; its full sequence is UDP-URONIC ACID TRANSPORTER 1 (309 aa).

Helical transmembrane passes span 9–29 (TLFI…VLLL), 43–63 (IFLT…SIVF), 78–98 (FLKV…GNIS), 104–124 (VSFN…FAYL), 131–151 (AWVT…ASGG), 152–172 (EPGF…ARAF), 193–213 (LMLY…LFME), 231–251 (WILL…NFLV), 256–278 (SALT…SILI), and 283–302 (VTVM…VAYG).

This sequence belongs to the TPT transporter family. TPT (TC 2.A.7.9) subfamily. As to expression, ubiquitous.

The protein resides in the golgi apparatus membrane. Its function is as follows. UDP-glucuronic acid transporter that modulates the polysaccharide composition of seed mucilage. Transports UDP-glucuronic acid (UDP-GlcA) and UDP-galacturonic acid (UDP-GalA) in vitro. This chain is UDP-URONIC ACID TRANSPORTER 1, found in Arabidopsis thaliana (Mouse-ear cress).